Consider the following 1755-residue polypeptide: Transposon Ty1-ML2 Gag-Pol polyprotein (1755 aa).

A compositionally biased stretch (low complexity) spans 1-16; the sequence is MESQQLSQHSHISHGS. Disordered regions lie at residues 1-93, 126-173, and 352-421; these read MESQ…MMTQ, PQSQ…RPPP, and GSRN…SKST. Polar residues-rich tracts occupy residues 48 to 60 and 127 to 152; these read TKANSQQTTTPAS and QSQFPQYPSSVGTPLSTPSPESGNTF. Residues 153–165 show a composition bias toward low complexity; that stretch reads TDSSSADSDMTST. Residues 299 to 401 form an RNA-binding region; it reads NNGIHINNKV…NSKSKTARAH (103 aa). Low complexity predominate over residues 402–418; it reads NVSTSNNSPSTDNDSIS. Phosphoserine is present on S416. The active-site For protease activity; shared with dimeric partner is D461. Residues 583 to 640 form an integrase-type zinc finger-like region; it reads NVHTSESTRKYPYPFIHRMLAHANAQTIRYSLKNNTITYFNESDVDRSSAIDYQCPDC. Positions 660-835 constitute an Integrase catalytic domain; that stretch reads NSYEPFQYLH…AGLDISTLLP (176 aa). 2 residues coordinate Mg(2+): D671 and D736. Disordered stretches follow at residues 956 to 1087, 1092 to 1111, and 1130 to 1171; these read SKAV…ETEK, RSPSIDASPPENNSSHNIVP, and DLPL…DSNA. Low complexity predominate over residues 960 to 969; that stretch reads SPTDSTPPST. The span at 1005–1015 shows a compositional bias: polar residues; it reads STPQISNIEST. Positions 1038–1053 are enriched in basic and acidic residues; it reads ESSHASKSKDFRHSDS. 2 stretches are compositionally biased toward polar residues: residues 1054 to 1082 and 1101 to 1111; these read YSENETNHTNVPISSTGGTNNKTVPQISD and PENNSSHNIVP. Residues 1178–1212 carry the Bipartite nuclear localization signal motif; the sequence is KKRSLEDNETEIKVSRDTWNTKNMRSLEPPRSKKR. Positions 1338–1476 constitute a Reverse transcriptase Ty1/copia-type domain; sequence NNYYITQLDI…DILGLEIKYQ (139 aa). D1346, D1427, D1428, D1610, E1652, and D1685 together coordinate Mg(2+). Residues 1610-1752 form the RNase H Ty1/copia-type domain; the sequence is DASYGNQPYY…IKTFKLLTNK (143 aa).

As to quaternary structure, the capsid protein forms a homotrimer, from which the VLPs are assembled. The protease is a homodimer, whose active site consists of two apposed aspartic acid residues. Initially, virus-like particles (VLPs) are composed of the structural unprocessed proteins Gag and Gag-Pol, and also contain the host initiator methionine tRNA (tRNA(i)-Met) which serves as a primer for minus-strand DNA synthesis, and a dimer of genomic Ty RNA. Processing of the polyproteins occurs within the particle and proceeds by an ordered pathway, called maturation. First, the protease (PR) is released by autocatalytic cleavage of the Gag-Pol polyprotein yielding capsid protein p45 and a Pol-p154 precursor protein. This cleavage is a prerequisite for subsequent processing of Pol-p154 at the remaining sites to release the mature structural and catalytic proteins. Maturation takes place prior to the RT reaction and is required to produce transposition-competent VLPs.

The protein localises to the cytoplasm. Its subcellular location is the nucleus. It carries out the reaction DNA(n) + a 2'-deoxyribonucleoside 5'-triphosphate = DNA(n+1) + diphosphate. The catalysed reaction is Endonucleolytic cleavage to 5'-phosphomonoester.. Functionally, capsid protein (CA) is the structural component of the virus-like particle (VLP), forming the shell that encapsulates the retrotransposons dimeric RNA genome. The particles are assembled from trimer-clustered units and there are holes in the capsid shells that allow for the diffusion of macromolecules. CA also has nucleocapsid-like chaperone activity, promoting primer tRNA(i)-Met annealing to the multipartite primer-binding site (PBS), dimerization of Ty1 RNA and initiation of reverse transcription. Its function is as follows. The aspartyl protease (PR) mediates the proteolytic cleavages of the Gag and Gag-Pol polyproteins after assembly of the VLP. Reverse transcriptase/ribonuclease H (RT) is a multifunctional enzyme that catalyzes the conversion of the retro-elements RNA genome into dsDNA within the VLP. The enzyme displays a DNA polymerase activity that can copy either DNA or RNA templates, and a ribonuclease H (RNase H) activity that cleaves the RNA strand of RNA-DNA heteroduplexes during plus-strand synthesis and hydrolyzes RNA primers. The conversion leads to a linear dsDNA copy of the retrotransposon that includes long terminal repeats (LTRs) at both ends. In terms of biological role, integrase (IN) targets the VLP to the nucleus, where a subparticle preintegration complex (PIC) containing at least integrase and the newly synthesized dsDNA copy of the retrotransposon must transit the nuclear membrane. Once in the nucleus, integrase performs the integration of the dsDNA into the host genome. This is Transposon Ty1-ML2 Gag-Pol polyprotein (TY1B-ML2) from Saccharomyces cerevisiae (strain ATCC 204508 / S288c) (Baker's yeast).